We begin with the raw amino-acid sequence, 226 residues long: MFIKFEKVKKLLNMLQSMLEAGVHFGHQSRRWNPKMAPYIYEEKNGIHILDVVQTIGELEKARTAFKSAKNVIFVGTRPAIAPLIEQVATKTGSNYVNTRWVGGLLTNWTTMTMCLEKLGRLDAQLETATPKKGFTKKDILSLTRERERLEKFFGGLRNLKTLPDLVVIVGQPNERNAVLECQKLNIPTITLLDSNCDPTFVSYGIPANDDSARSVAFILDQLTKD.

This sequence belongs to the universal ribosomal protein uS2 family.

It localises to the plastid. Its subcellular location is the chloroplast. This Ostreococcus tauri protein is Small ribosomal subunit protein uS2c (rps2).